The primary structure comprises 150 residues: SPbeta prophage-derived uncharacterized protein YoqH (150 aa).

A signal peptide spans 1-23; sequence MKRFILVLSFLSIIVAYPIQTNA.

This Bacillus subtilis (strain 168) protein is SPbeta prophage-derived uncharacterized protein YoqH (yoqH).